The chain runs to 388 residues: Succinate--CoA ligase [ADP-forming] subunit beta (388 aa).

The ATP-grasp domain maps to lysine 9–histidine 244. ATP-binding positions include lysine 46, glycine 53–glycine 55, glutamate 99, threonine 102, and glutamate 107. Mg(2+) contacts are provided by asparagine 199 and aspartate 213. Substrate is bound by residues asparagine 264 and glycine 321–valine 323.

The protein belongs to the succinate/malate CoA ligase beta subunit family. As to quaternary structure, heterotetramer of two alpha and two beta subunits. The cofactor is Mg(2+).

The enzyme catalyses succinate + ATP + CoA = succinyl-CoA + ADP + phosphate. The catalysed reaction is GTP + succinate + CoA = succinyl-CoA + GDP + phosphate. It participates in carbohydrate metabolism; tricarboxylic acid cycle; succinate from succinyl-CoA (ligase route): step 1/1. Its function is as follows. Succinyl-CoA synthetase functions in the citric acid cycle (TCA), coupling the hydrolysis of succinyl-CoA to the synthesis of either ATP or GTP and thus represents the only step of substrate-level phosphorylation in the TCA. The beta subunit provides nucleotide specificity of the enzyme and binds the substrate succinate, while the binding sites for coenzyme A and phosphate are found in the alpha subunit. This chain is Succinate--CoA ligase [ADP-forming] subunit beta, found in Alteromonas mediterranea (strain DSM 17117 / CIP 110805 / LMG 28347 / Deep ecotype).